The following is a 116-amino-acid chain: Iron-sulfur cluster insertion protein ErpA (116 aa).

Residues cysteine 44, cysteine 108, and cysteine 110 each coordinate iron-sulfur cluster.

It belongs to the HesB/IscA family. Homodimer. Requires iron-sulfur cluster as cofactor.

In terms of biological role, required for insertion of 4Fe-4S clusters for at least IspG. In Nitrosococcus oceani (strain ATCC 19707 / BCRC 17464 / JCM 30415 / NCIMB 11848 / C-107), this protein is Iron-sulfur cluster insertion protein ErpA.